We begin with the raw amino-acid sequence, 400 residues long: Golgin-45 (400 aa).

Residues 1 to 36 form a disordered region; the sequence is MEKMTTLKSFESKGILTSTPIRGAGDGMETEEPPKS. Residues 22-26 carry the Tankyrase-binding motif motif; it reads RGAGD. Phosphoserine is present on serine 53. The stretch at 126–263 forms a coiled coil; sequence LSEVKKVLEK…LSEREQFRQE (138 aa). At serine 356 the chain carries Phosphoserine. The tract at residues 394–400 is essential for interaction with GORASP2; the sequence is QGELLAL.

In terms of assembly, interacts with GORASP2. Interacts with the GTP-bound form of RAB2, but not with other Golgi Rab proteins. Identified in a complex with RAB2 and GORASP2. ADP-ribosylated by tankyrase TNKS and TNKS2. Poly-ADP-ribosylated protein is recognized by RNF146, followed by ubiquitination. In terms of processing, ubiquitinated by RNF146 when poly-ADP-ribosylated, leading to its degradation.

It localises to the golgi apparatus membrane. Its function is as follows. Required for normal Golgi structure and for protein transport from the endoplasmic reticulum (ER) through the Golgi apparatus to the cell surface. The protein is Golgin-45 of Rattus norvegicus (Rat).